We begin with the raw amino-acid sequence, 97 residues long: MKLTSHDIIRKPVITEKSMAAMAENKYTFIVHMAANKVQIKRAVEEVFNVKVADVKTMRFEGKTKRVGVHIGKRADFKKAVITLAEGSSIEFFEGMQ.

The protein belongs to the universal ribosomal protein uL23 family. In terms of assembly, part of the 50S ribosomal subunit. Contacts protein L29, and trigger factor when it is bound to the ribosome.

Its function is as follows. One of the early assembly proteins it binds 23S rRNA. One of the proteins that surrounds the polypeptide exit tunnel on the outside of the ribosome. Forms the main docking site for trigger factor binding to the ribosome. The sequence is that of Large ribosomal subunit protein uL23 from Clostridium perfringens (strain SM101 / Type A).